The chain runs to 252 residues: tRNA1(Val) (adenine(37)-N6)-methyltransferase (252 aa).

It belongs to the methyltransferase superfamily. tRNA (adenine-N(6)-)-methyltransferase family.

It is found in the cytoplasm. The enzyme catalyses adenosine(37) in tRNA1(Val) + S-adenosyl-L-methionine = N(6)-methyladenosine(37) in tRNA1(Val) + S-adenosyl-L-homocysteine + H(+). Specifically methylates the adenine in position 37 of tRNA(1)(Val) (anticodon cmo5UAC). This Proteus mirabilis (strain HI4320) protein is tRNA1(Val) (adenine(37)-N6)-methyltransferase.